Reading from the N-terminus, the 419-residue chain is MKVSNLKITNVKTILTAPGGIDLAVVKIETNEPGLYGLGCATFTQRIFAVKSAIDEYMAPFLVGKDPTRIEDIWQSGVVSGYWRNGPIMNNALSGVDMALWDIKGKLAGMPVYDLLGGKCRDGIPLYCHTDGGDEVEVEDNIRARMEEGYQYVRCQMGMYGGAGTDDLKLIATQLARAKNIQPKRSPRSKTPGIYFDPDAYAKSVPRLFDHLRNKLGFGIEFIHDVHERVTPVTAINLAKTLEQYQLFYLEDPVAPENIDWLKMLRQQSSTPISMGELFVNVNEWKPLIDNRLIDYIRCHVSTIGGITPARKLAVYSELNGVRTAWHGPGDISPVGVCANMHLDLSSPNFGIQEYTPMNDALRDVFPGCPEIDHGYAYLNDKPGLGIDIDEAKAAKYPCEGGIPSWTMARTPDGTASRP.

Substrate-binding residues include Gln45 and His129. The Proton donor/acceptor role is filled by Tyr160. Residue Asp225 participates in Mg(2+) binding. Residue His227 is the Proton donor/acceptor of the active site. Residues Glu251 and Glu277 each coordinate Mg(2+). Substrate contacts are provided by Glu277, Arg298, His327, Asp331, and Glu354.

Belongs to the mandelate racemase/muconate lactonizing enzyme family. GalD subfamily. Homotetramer. Requires Mg(2+) as cofactor.

The enzyme catalyses D-gluconate = 2-dehydro-3-deoxy-D-gluconate + H2O. In terms of biological role, has low D-gluconate dehydratase activity (in vitro), suggesting that it has no significant role in D-gluconate degradation in vivo. Has no detectable activity with a panel of 70 other acid sugars (in vitro). The chain is D-galactonate dehydratase family member SEN1436 from Salmonella enteritidis PT4 (strain P125109).